Reading from the N-terminus, the 310-residue chain is D-alanyl-D-alanine endopeptidase (310 aa).

Residues Met1 to Ala25 form the signal peptide. The active-site Acyl-ester intermediate is Ser67. Lys70 serves as the catalytic Proton acceptor. The active site involves Ser124. Substrate is bound at residue Lys231.

This sequence belongs to the peptidase S11 family. In terms of processing, pbp8 is a proteolytic product of Pbp7.

It is found in the periplasm. Cell wall formation. May play a specialized role in remodeling the cell wall. Specifically hydrolyzes the DD-diaminopimelate-alanine bonds in high-molecular-mass murein sacculi. The protein is D-alanyl-D-alanine endopeptidase (pbpG) of Escherichia coli (strain K12).